Here is a 91-residue protein sequence, read N- to C-terminus: MPNIKSAKRRVKISERNRLINKAYKTRMKNSIKKVLLALSEGKTKEEVEQLYKIAQSAIDKAAKIGAVHKNEAARRKSRLMSKINKHFAIE.

The protein belongs to the bacterial ribosomal protein bS20 family.

Binds directly to 16S ribosomal RNA. The protein is Small ribosomal subunit protein bS20 of Thermosipho melanesiensis (strain DSM 12029 / CIP 104789 / BI429).